The chain runs to 30 residues: Elongation factor 1-delta (30 aa).

The protein belongs to the EF-1-beta/EF-1-delta family. EF-1 is composed of 4 subunits: alpha, beta (1B-alpha=beta'), delta (1B-beta), and gamma (1B-gamma).

Its function is as follows. EF-1-beta and EF-1-delta stimulate the exchange of GDP bound to EF-1-alpha to GTP. The sequence is that of Elongation factor 1-delta from Populus euphratica (Euphrates poplar).